A 563-amino-acid chain; its full sequence is Src substrate protein p85 (563 aa).

Cortactin repeat units follow at residues 89-125, 126-162, 163-199, 200-236, 237-273, and 274-310; these read ASHG…SQVD, SVKG…SQKD, YSSG…SQKD, YSKG…SQKD, YVKG…SQKD, and YKSG…SQQD. Residues 311 to 333 form a Cortactin 7; truncated repeat; sequence YSKGFGGKYGVQKDRMDKNAATF. Residues 331-477 are disordered; the sequence is ATFEDIEKPT…EAVSQREAEY (147 aa). Positions 349–410 form a coiled coil; it reads VERVANKTSS…EEQAKAKKQT (62 aa). Positions 366-405 are enriched in basic and acidic residues; it reads LAKEKEQEDRRKAEAERAQRMAREKQEQEEARRKLEEQAK. Residues 505–563 form the SH3 domain; the sequence is ELGITAIALYDYQAAGDDEISFDPDDIITNIEMIDDGWWRGVCKGRYGLFPANYVELRQ.

In terms of processing, acetylated. Post-translationally, in normal cells, appears to be phosphorylated on serine and threonine; in cells expressing activated forms of pp60-src, they become heavily phosphorylated on tyrosine in vitro. Tyrosine phosphorylation in transformed cells may contribute to cellular growth regulation and transformation.

Its subcellular location is the cytoplasm. It is found in the cytoskeleton. The protein localises to the cell projection. It localises to the lamellipodium. The protein resides in the ruffle. Its subcellular location is the dendrite. It is found in the cell membrane. The protein localises to the podosome. It localises to the cell junction. The protein resides in the focal adhesion. Its subcellular location is the membrane. It is found in the clathrin-coated pit. The protein localises to the dendritic spine. It localises to the cell cortex. The protein resides in the endoplasmic reticulum. In terms of biological role, contributes to the organization of the actin cytoskeleton and cell shape. Plays a role in the formation of lamellipodia and in cell migration. Plays a role in the regulation of neuron morphology, axon growth and formation of neuronal growth cones, and may play a role in the regulation of neuronal spine density. Plays a role in focal adhesion assembly and turnover. Plays a role in intracellular protein transport and endocytosis, and in modulating the levels of potassium channels present at the cell membrane. Plays a role in endocytosis via clathrin-coated pits. This chain is Src substrate protein p85 (CTTN1), found in Gallus gallus (Chicken).